The primary structure comprises 142 residues: Protein CPn_0742/CP_0003/CPj0742/CpB0770 (142 aa).

The tract at residues 115–142 is disordered; it reads LHPTKESKRPKQKLSSTKKNKKKNWIPL. Basic residues predominate over residues 124–142; sequence PKQKLSSTKKNKKKNWIPL.

It belongs to the chlamydial CPn_0742/CT_635/TC_0003 family.

This Chlamydia pneumoniae (Chlamydophila pneumoniae) protein is Protein CPn_0742/CP_0003/CPj0742/CpB0770.